Here is a 345-residue protein sequence, read N- to C-terminus: Anthranilate phosphoribosyltransferase (345 aa).

5-phospho-alpha-D-ribose 1-diphosphate is bound by residues glycine 80, glycine 83 to aspartate 84, threonine 88, asparagine 90 to threonine 93, lysine 108 to serine 116, and serine 120. Glycine 80 is an anthranilate binding site. Position 92 (serine 92) interacts with Mg(2+). Position 111 (asparagine 111) interacts with anthranilate. Anthranilate is bound at residue arginine 166. Mg(2+)-binding residues include aspartate 225 and glutamate 226.

The protein belongs to the anthranilate phosphoribosyltransferase family. In terms of assembly, homodimer. Mg(2+) is required as a cofactor.

It catalyses the reaction N-(5-phospho-beta-D-ribosyl)anthranilate + diphosphate = 5-phospho-alpha-D-ribose 1-diphosphate + anthranilate. Its pathway is amino-acid biosynthesis; L-tryptophan biosynthesis; L-tryptophan from chorismate: step 2/5. Functionally, catalyzes the transfer of the phosphoribosyl group of 5-phosphorylribose-1-pyrophosphate (PRPP) to anthranilate to yield N-(5'-phosphoribosyl)-anthranilate (PRA). This is Anthranilate phosphoribosyltransferase from Pelotomaculum thermopropionicum (strain DSM 13744 / JCM 10971 / SI).